The chain runs to 119 residues: Flagellar transcriptional regulator FlhD (119 aa).

This sequence belongs to the FlhD family. Homodimer; disulfide-linked. Forms a heterohexamer composed of two FlhC and four FlhD subunits. Each FlhC binds a FlhD dimer, forming a heterotrimer, and a hexamer assembles by dimerization of two heterotrimers.

The protein resides in the cytoplasm. Its function is as follows. Functions in complex with FlhC as a master transcriptional regulator that regulates transcription of several flagellar and non-flagellar operons by binding to their promoter region. Activates expression of class 2 flagellar genes, including fliA, which is a flagellum-specific sigma factor that turns on the class 3 genes. Also regulates genes whose products function in a variety of physiological pathways. This chain is Flagellar transcriptional regulator FlhD, found in Yersinia enterocolitica.